Consider the following 367-residue polypeptide: uncharacterized protein (367 aa).

The ABC transporter domain occupies L4–I234. G36–S43 contributes to the ATP binding site.

This sequence belongs to the ABC transporter superfamily.

This is an uncharacterized protein from Bacillus subtilis (strain 168).